Here is a 253-residue protein sequence, read N- to C-terminus: Tetraspanin-11 (253 aa).

Helical transmembrane passes span 19–39 (LLFIFNFFFWVGGAAVMAVGI), 63–83 (ILIFVGGLVMTTGFLGFGAII), and 93–113 (YFCLLLVIFLVELVAGVLAHV). An N-linked (GlcNAc...) asparagine glycan is attached at Asn-127. Residues 220–240 (LLLMGAVGIGVACLQICGMVL) traverse the membrane as a helical segment.

Belongs to the tetraspanin (TM4SF) family.

The protein localises to the membrane. The sequence is that of Tetraspanin-11 (Tspan11) from Mus musculus (Mouse).